A 212-amino-acid polypeptide reads, in one-letter code: Thiamine-phosphate synthase (212 aa).

Residues 40–44 (QFREK) and N75 contribute to the 4-amino-2-methyl-5-(diphosphooxymethyl)pyrimidine site. D76 and D95 together coordinate Mg(2+). S113 is a binding site for 4-amino-2-methyl-5-(diphosphooxymethyl)pyrimidine. 139–141 (TSS) is a 2-[(2R,5Z)-2-carboxy-4-methylthiazol-5(2H)-ylidene]ethyl phosphate binding site. 4-amino-2-methyl-5-(diphosphooxymethyl)pyrimidine is bound at residue K142. Residues G171 and 191–192 (IS) each bind 2-[(2R,5Z)-2-carboxy-4-methylthiazol-5(2H)-ylidene]ethyl phosphate.

It belongs to the thiamine-phosphate synthase family. Requires Mg(2+) as cofactor.

It catalyses the reaction 2-[(2R,5Z)-2-carboxy-4-methylthiazol-5(2H)-ylidene]ethyl phosphate + 4-amino-2-methyl-5-(diphosphooxymethyl)pyrimidine + 2 H(+) = thiamine phosphate + CO2 + diphosphate. It carries out the reaction 2-(2-carboxy-4-methylthiazol-5-yl)ethyl phosphate + 4-amino-2-methyl-5-(diphosphooxymethyl)pyrimidine + 2 H(+) = thiamine phosphate + CO2 + diphosphate. The catalysed reaction is 4-methyl-5-(2-phosphooxyethyl)-thiazole + 4-amino-2-methyl-5-(diphosphooxymethyl)pyrimidine + H(+) = thiamine phosphate + diphosphate. It participates in cofactor biosynthesis; thiamine diphosphate biosynthesis; thiamine phosphate from 4-amino-2-methyl-5-diphosphomethylpyrimidine and 4-methyl-5-(2-phosphoethyl)-thiazole: step 1/1. Functionally, condenses 4-methyl-5-(beta-hydroxyethyl)thiazole monophosphate (THZ-P) and 2-methyl-4-amino-5-hydroxymethyl pyrimidine pyrophosphate (HMP-PP) to form thiamine monophosphate (TMP). The sequence is that of Thiamine-phosphate synthase from Staphylococcus epidermidis (strain ATCC 35984 / DSM 28319 / BCRC 17069 / CCUG 31568 / BM 3577 / RP62A).